A 127-amino-acid chain; its full sequence is Aspartate 1-decarboxylase (127 aa).

The active-site Schiff-base intermediate with substrate; via pyruvic acid is Ser-25. Ser-25 is subject to Pyruvic acid (Ser). Substrate is bound at residue Thr-57. Tyr-58 (proton donor) is an active-site residue. Substrate is bound at residue 73 to 75; it reads GAA.

Belongs to the PanD family. In terms of assembly, heterooctamer of four alpha and four beta subunits. The cofactor is pyruvate. In terms of processing, is synthesized initially as an inactive proenzyme, which is activated by self-cleavage at a specific serine bond to produce a beta-subunit with a hydroxyl group at its C-terminus and an alpha-subunit with a pyruvoyl group at its N-terminus.

The protein resides in the cytoplasm. It catalyses the reaction L-aspartate + H(+) = beta-alanine + CO2. The protein operates within cofactor biosynthesis; (R)-pantothenate biosynthesis; beta-alanine from L-aspartate: step 1/1. Its function is as follows. Catalyzes the pyruvoyl-dependent decarboxylation of aspartate to produce beta-alanine. The chain is Aspartate 1-decarboxylase from Clostridium acetobutylicum (strain ATCC 824 / DSM 792 / JCM 1419 / IAM 19013 / LMG 5710 / NBRC 13948 / NRRL B-527 / VKM B-1787 / 2291 / W).